The primary structure comprises 234 residues: Sugar fermentation stimulation protein homolog (234 aa).

This sequence belongs to the SfsA family.

The sequence is that of Sugar fermentation stimulation protein homolog from Shewanella frigidimarina (strain NCIMB 400).